The primary structure comprises 144 residues: Large ribosomal subunit protein uL15 (144 aa).

The segment at 1 to 48 (MQLNNLKPAAGSKHAKRRVGRGIGSGLGKTAGRGHKGQKSRSGGFHKV) is disordered. Positions 21 to 31 (RGIGSGLGKTA) are enriched in gly residues.

Belongs to the universal ribosomal protein uL15 family. As to quaternary structure, part of the 50S ribosomal subunit.

In terms of biological role, binds to the 23S rRNA. The polypeptide is Large ribosomal subunit protein uL15 (Cupriavidus pinatubonensis (strain JMP 134 / LMG 1197) (Cupriavidus necator (strain JMP 134))).